Reading from the N-terminus, the 374-residue chain is Queuine tRNA-ribosyltransferase (374 aa).

Aspartate 91 (proton acceptor) is an active-site residue. Residues 91–95 (DSGGY), aspartate 145, glutamine 189, and glycine 216 contribute to the substrate site. The RNA binding stretch occupies residues 247–253 (GVGTVPD). Residue aspartate 266 is the Nucleophile of the active site. An RNA binding; important for wobble base 34 recognition region spans residues 271 to 275 (TRNAR). Positions 304, 306, 309, and 335 each coordinate Zn(2+).

It belongs to the queuine tRNA-ribosyltransferase family. As to quaternary structure, homodimer. Within each dimer, one monomer is responsible for RNA recognition and catalysis, while the other monomer binds to the replacement base PreQ1. It depends on Zn(2+) as a cofactor.

It catalyses the reaction 7-aminomethyl-7-carbaguanine + guanosine(34) in tRNA = 7-aminomethyl-7-carbaguanosine(34) in tRNA + guanine. It functions in the pathway tRNA modification; tRNA-queuosine biosynthesis. Functionally, catalyzes the base-exchange of a guanine (G) residue with the queuine precursor 7-aminomethyl-7-deazaguanine (PreQ1) at position 34 (anticodon wobble position) in tRNAs with GU(N) anticodons (tRNA-Asp, -Asn, -His and -Tyr). Catalysis occurs through a double-displacement mechanism. The nucleophile active site attacks the C1' of nucleotide 34 to detach the guanine base from the RNA, forming a covalent enzyme-RNA intermediate. The proton acceptor active site deprotonates the incoming PreQ1, allowing a nucleophilic attack on the C1' of the ribose to form the product. After dissociation, two additional enzymatic reactions on the tRNA convert PreQ1 to queuine (Q), resulting in the hypermodified nucleoside queuosine (7-(((4,5-cis-dihydroxy-2-cyclopenten-1-yl)amino)methyl)-7-deazaguanosine). This chain is Queuine tRNA-ribosyltransferase, found in Leptospira interrogans serogroup Icterohaemorrhagiae serovar Lai (strain 56601).